Here is a 486-residue protein sequence, read N- to C-terminus: MTTFYTVVNWLVILGYWLLIAGVTLRILMKRRAVPSAMAWLLIIYILPLVGIIAYLSFGELHLGKRRAERARAMWPSTAKWLNDLKACKHIFAEDNSPVAESLFKLCERRQGIGGVKGNQLQLLTESDDVMQALIRDIQLARHNIEMVFYIWQPGGMADSVAESLMAAARRGVHCRLMLDSAGSVAFFRSPWAAMMRNAGIEVVEALKVNLMRVFLRRMDLRQHRKMVMIDNYIAYTGSMNMVDPRYFKQDSGVGQWIDLMARMEGPVATSMGIVYSCDWEIETGKRILPPPPDVNIMPFEEASGHTIHTIASGPGFPEDLIHQALLTAAYAAKEHLIMTTPYFVPSDDLLHAICTAAQRGVDVSIILPRKNDSLLVGWASRAFFTELLAAGVKIYQFEGGLLHTKSVLVDGELSLVGTVNLDMRSLWLNFEITLVIDDAGFGSDLAAVQDDYISRSRLLDARLWLKRPLWQRIAERLFYFFSPLL.

Helical transmembrane passes span 3-23 and 38-58; these read TFYT…IAGV and MAWL…YLSF. 2 consecutive PLD phosphodiesterase domains span residues 219–246 and 399–426; these read MDLR…VDPR and EGGL…DMRS. Catalysis depends on residues histidine 224, lysine 226, aspartate 231, histidine 404, lysine 406, and aspartate 411.

It belongs to the phospholipase D family. Cardiolipin synthase subfamily. ClsA sub-subfamily.

The protein resides in the cell inner membrane. The enzyme catalyses 2 a 1,2-diacyl-sn-glycero-3-phospho-(1'-sn-glycerol) = a cardiolipin + glycerol. In terms of biological role, catalyzes the reversible phosphatidyl group transfer from one phosphatidylglycerol molecule to another to form cardiolipin (CL) (diphosphatidylglycerol) and glycerol. The polypeptide is Cardiolipin synthase A (Klebsiella pneumoniae subsp. pneumoniae (strain ATCC 700721 / MGH 78578)).